Consider the following 94-residue polypeptide: uncharacterized protein (94 aa).

This is an uncharacterized protein from Saccharomyces cerevisiae (strain ATCC 204508 / S288c) (Baker's yeast).